A 252-amino-acid chain; its full sequence is Mitochondrial cardiolipin hydrolase (252 aa).

Residues 1 to 4 (MGRL) lie on the Mitochondrial intermembrane side of the membrane. A required for mitochondrial localization region spans residues 1–39 (MGRLSWQVAAAAAVGLALTLEALPWVLRWLRSRRRRPRR). The helical transmembrane segment at 5–27 (SWQVAAAAAVGLALTLEALPWVL) threads the bilayer. The Cytoplasmic segment spans residues 28–252 (RWLRSRRRRP…TCGTSSESQT (225 aa)). The C3H1-type; atypical zinc-finger motif lies at 45 to 78 (PSQVTCTEALLRAPGAELAELPEGCPCGLPHGES). Residues 151–178 (DPGYMHHKFAIVDKRVLITGSLNWTTQA) enclose the PLD phosphodiesterase domain. Active-site residues include histidine 156, lysine 158, and aspartate 163.

Belongs to the phospholipase D family. MitoPLD/Zucchini subfamily. Homodimer. Interacts with MOV10L1. Interacts with MIGA1 and MIGA2; possibly facilitating homodimer formation. Interacts with GK2. As to expression, predominantly expressed in testis and ovary, but not limited to gonads (at protein level). It is also found in brain, heart, pituitary gland, prostate, pancreas, thyroid, bone marrow, lung and muscle.

It is found in the mitochondrion outer membrane. The protein localises to the golgi apparatus. It carries out the reaction a cardiolipin + H2O = a 1,2-diacyl-sn-glycero-3-phospho-(1'-sn-glycerol) + a 1,2-diacyl-sn-glycero-3-phosphate + H(+). With respect to regulation, MYC stimulates its phospholipase activity. MIGA1 and MIGA2 increase PLD6 self-association affinity and affects the homodimer conformation facilitating its phospholipase activity over the nuclease activity. Single stranded DNA (ssDNA) hydrolase activity does not depend upon, but is stimulated by the presence of Ca(2+) and Mn(2+). Its function is as follows. Presents phospholipase and nuclease activities, depending on the different physiological conditions. Interaction with Mitoguardin (MIGA1 or MIGA2) affects the dimer conformation, facilitating the lipase activity over the nuclease activity. Plays a key role in mitochondrial fusion and fission via its phospholipase activity. In its phospholipase role, it uses the mitochondrial lipid cardiolipin as substrate to generate phosphatidate (PA or 1,2-diacyl-sn-glycero-3-phosphate), a second messenger signaling lipid. Production of PA facilitates Mitofusin-mediated fusion, whereas the cleavage of PA by the Lipin family of phosphatases produces diacylgycerol (DAG) which promotes mitochondrial fission. Both Lipin and DAG regulate mitochondrial dynamics and membrane fusion/fission, important processes for adapting mitochondrial metabolism to changes in cell physiology. Mitochondrial fusion enables cells to cope with the increased nucleotide demand during DNA synthesis. Mitochondrial function and dynamics are closely associated with biological processes such as cell growth, proliferation, and differentiation. Mediator of MYC activity, promotes mitochondrial fusion and activates AMPK which in turn inhibits YAP/TAZ, thereby inducing cell growth and proliferation. The endonuclease activity plays a critical role in PIWI-interacting RNA (piRNA) biogenesis during spermatogenesis. Implicated in spermatogenesis and sperm fertility in testicular germ cells, its single strand-specific nuclease activity is critical for the biogenesis/maturation of PIWI-interacting RNA (piRNA). MOV10L1 selectively binds to piRNA precursors and funnels them to the endonuclease that catalyzes the first cleavage step of piRNA processing to generate piRNA intermediate fragments that are subsequently loaded to Piwi proteins. Cleaves either DNA or RNA substrates with similar affinity, producing a 5' phosphate end, in this way it participates in the processing of primary piRNA transcripts. piRNAs provide essential protection against the activity of mobile genetic elements. piRNA-mediated transposon silencing is thus critical for maintaining genome stability, in particular in germline cells when transposons are mobilized as a consequence of wide-spread genomic demethylation. PA may act as signaling molecule in the recognition/transport of the precursor RNAs of primary piRNAs. Interacts with tesmin in testes, suggesting a role in spermatogenesis via association with its interacting partner. The polypeptide is Mitochondrial cardiolipin hydrolase (PLD6) (Homo sapiens (Human)).